Here is a 266-residue protein sequence, read N- to C-terminus: Glucosamine-6-phosphate deaminase (266 aa).

The active-site Proton acceptor; for enolization step is the Asp-72. Asp-141 functions as the For ring-opening step in the catalytic mechanism. The active-site Proton acceptor; for ring-opening step is His-143. The active-site For ring-opening step is Glu-148.

It belongs to the glucosamine/galactosamine-6-phosphate isomerase family. NagB subfamily. As to quaternary structure, homohexamer.

The enzyme catalyses alpha-D-glucosamine 6-phosphate + H2O = beta-D-fructose 6-phosphate + NH4(+). It functions in the pathway amino-sugar metabolism; N-acetylneuraminate degradation; D-fructose 6-phosphate from N-acetylneuraminate: step 5/5. With respect to regulation, allosterically activated by N-acetylglucosamine 6-phosphate (GlcNAc6P). Its function is as follows. Catalyzes the reversible isomerization-deamination of glucosamine 6-phosphate (GlcN6P) to form fructose 6-phosphate (Fru6P) and ammonium ion. This is Glucosamine-6-phosphate deaminase from Vibrio cholerae serotype O1 (strain ATCC 39541 / Classical Ogawa 395 / O395).